Here is a 963-residue protein sequence, read N- to C-terminus: Phosphoenolpyruvate carboxylase (963 aa).

S11 carries the post-translational modification Phosphoserine. Residues H172 and K600 contribute to the active site.

Belongs to the PEPCase type 1 family. In terms of assembly, homotetramer. Requires Mg(2+) as cofactor.

It is found in the cytoplasm. The enzyme catalyses oxaloacetate + phosphate = phosphoenolpyruvate + hydrogencarbonate. By light-reversible phosphorylation. Its function is as follows. Through the carboxylation of phosphoenolpyruvate (PEP) it forms oxaloacetate, a four-carbon dicarboxylic acid source for the tricarboxylic acid cycle. In Picea abies (Norway spruce), this protein is Phosphoenolpyruvate carboxylase (PPC).